Consider the following 448-residue polypeptide: Glucose-6-phosphate isomerase (448 aa).

The Proton donor role is filled by E290. Catalysis depends on residues H311 and K425.

Belongs to the GPI family.

The protein localises to the cytoplasm. The enzyme catalyses alpha-D-glucose 6-phosphate = beta-D-fructose 6-phosphate. The protein operates within carbohydrate biosynthesis; gluconeogenesis. It participates in carbohydrate degradation; glycolysis; D-glyceraldehyde 3-phosphate and glycerone phosphate from D-glucose: step 2/4. In terms of biological role, catalyzes the reversible isomerization of glucose-6-phosphate to fructose-6-phosphate. The sequence is that of Glucose-6-phosphate isomerase from Oceanobacillus iheyensis (strain DSM 14371 / CIP 107618 / JCM 11309 / KCTC 3954 / HTE831).